We begin with the raw amino-acid sequence, 326 residues long: Olfactory receptor 11H12 (326 aa).

Over 1 to 44 the chain is Extracellular; that stretch reads MCPLTLQVTGLMNVSEPNSSFAFVNEFILQGFTCEWTIQIFLFS. Asparagine 13 and asparagine 18 each carry an N-linked (GlcNAc...) asparagine glycan. The chain crosses the membrane as a helical span at residues 45–65; it reads LFTTTYALTITGNGAIAFVLW. Over 66–72 the chain is Cytoplasmic; it reads CDWRLHT. Residues 73–93 traverse the membrane as a helical segment; it reads PMYMFLGNFSFLEIWYVSSTV. Residues 94–112 are Extracellular-facing; that stretch reads PKMLVNFLSEKKNISFAGC. N-linked (GlcNAc...) asparagine glycosylation is present at asparagine 106. Cysteine 112 and cysteine 194 are joined by a disulfide. A helical transmembrane segment spans residues 113–133; sequence FLQFYFFFSLGTSECLLLTVM. Over 134 to 158 the chain is Cytoplasmic; it reads AFDQYLAICRPLLYPNIMTGHLCAK. The chain crosses the membrane as a helical span at residues 159–179; sequence LVILCWVCGFLWFLIPIVLIS. The Extracellular portion of the chain corresponds to 180 to 216; sequence QMPFCGPNIIDHVVCDPGPRFALDCVSAPRIQLFCYT. A helical membrane pass occupies residues 217 to 237; sequence LSSLVIFGNFLFIIGSYTLVL. The Cytoplasmic segment spans residues 238 to 259; the sequence is KAVLGMPSSTGRHKAFSTCGSH. The helical transmembrane segment at 260–280 threads the bilayer; that stretch reads LAVVSLCYSSLMVMYVSPGLG. Topologically, residues 281–287 are extracellular; it reads HSTGMQK. A helical transmembrane segment spans residues 288-308; it reads IETLFYAMVTPLFNPLIYSLQ. At 309–326 the chain is on the cytoplasmic side; the sequence is NKEIKAALRKVLGSSNII.

This sequence belongs to the G-protein coupled receptor 1 family.

The protein localises to the cell membrane. Odorant receptor. The polypeptide is Olfactory receptor 11H12 (OR11H12) (Homo sapiens (Human)).